The chain runs to 71 residues: Allergen Art v 2 (71 aa).

Post-translationally, glycosylated. High-mannose oligosaccharides (Man(5-9)GlcNAc(2)).

The sequence is that of Allergen Art v 2 from Artemisia vulgaris (Mugwort).